A 214-amino-acid chain; its full sequence is Thymidylate kinase (214 aa).

ATP is bound at residue 9 to 16 (GVDGSGKS).

It belongs to the thymidylate kinase family.

It catalyses the reaction dTMP + ATP = dTDP + ADP. Phosphorylation of dTMP to form dTDP in both de novo and salvage pathways of dTTP synthesis. The polypeptide is Thymidylate kinase (Symbiobacterium thermophilum (strain DSM 24528 / JCM 14929 / IAM 14863 / T)).